We begin with the raw amino-acid sequence, 740 residues long: 1,4-alpha-glucan branching enzyme GlgB (740 aa).

The Nucleophile role is filled by Asp-419. Residue Glu-472 is the Proton donor of the active site.

This sequence belongs to the glycosyl hydrolase 13 family. GlgB subfamily. In terms of assembly, monomer.

The catalysed reaction is Transfers a segment of a (1-&gt;4)-alpha-D-glucan chain to a primary hydroxy group in a similar glucan chain.. Its pathway is glycan biosynthesis; glycogen biosynthesis. In terms of biological role, catalyzes the formation of the alpha-1,6-glucosidic linkages in glycogen by scission of a 1,4-alpha-linked oligosaccharide from growing alpha-1,4-glucan chains and the subsequent attachment of the oligosaccharide to the alpha-1,6 position. The protein is 1,4-alpha-glucan branching enzyme GlgB of Thiobacillus denitrificans (strain ATCC 25259 / T1).